Reading from the N-terminus, the 445-residue chain is Glutamate-1-semialdehyde 2,1-aminomutase (445 aa).

Lys264 bears the N6-(pyridoxal phosphate)lysine mark.

This sequence belongs to the class-III pyridoxal-phosphate-dependent aminotransferase family. HemL subfamily. Requires pyridoxal 5'-phosphate as cofactor.

It localises to the cytoplasm. The enzyme catalyses (S)-4-amino-5-oxopentanoate = 5-aminolevulinate. The protein operates within porphyrin-containing compound metabolism; protoporphyrin-IX biosynthesis; 5-aminolevulinate from L-glutamyl-tRNA(Glu): step 2/2. This Halobacterium salinarum (strain ATCC 29341 / DSM 671 / R1) protein is Glutamate-1-semialdehyde 2,1-aminomutase.